The following is a 166-amino-acid chain: Putative pre-16S rRNA nuclease (166 aa).

The protein belongs to the YqgF nuclease family.

The protein resides in the cytoplasm. Functionally, could be a nuclease involved in processing of the 5'-end of pre-16S rRNA. This Mesorhizobium japonicum (strain LMG 29417 / CECT 9101 / MAFF 303099) (Mesorhizobium loti (strain MAFF 303099)) protein is Putative pre-16S rRNA nuclease.